Consider the following 272-residue polypeptide: 2-succinyl-6-hydroxy-2,4-cyclohexadiene-1-carboxylate synthase (272 aa).

Belongs to the AB hydrolase superfamily. MenH family. Monomer.

It catalyses the reaction 5-enolpyruvoyl-6-hydroxy-2-succinyl-cyclohex-3-ene-1-carboxylate = (1R,6R)-6-hydroxy-2-succinyl-cyclohexa-2,4-diene-1-carboxylate + pyruvate. It participates in quinol/quinone metabolism; 1,4-dihydroxy-2-naphthoate biosynthesis; 1,4-dihydroxy-2-naphthoate from chorismate: step 3/7. It functions in the pathway quinol/quinone metabolism; menaquinone biosynthesis. Its function is as follows. Catalyzes a proton abstraction reaction that results in 2,5-elimination of pyruvate from 2-succinyl-5-enolpyruvyl-6-hydroxy-3-cyclohexene-1-carboxylate (SEPHCHC) and the formation of 2-succinyl-6-hydroxy-2,4-cyclohexadiene-1-carboxylate (SHCHC). This chain is 2-succinyl-6-hydroxy-2,4-cyclohexadiene-1-carboxylate synthase, found in Yersinia pseudotuberculosis serotype IB (strain PB1/+).